The sequence spans 178 residues: Beta-lactoglobulin-1A/1C (178 aa).

An N-terminal signal peptide occupies residues 1–18 (MRCLLLTLGLALLCGVQA). Cystine bridges form between Cys-84/Cys-176 and Cys-124/Cys-137.

The protein belongs to the calycin superfamily. Lipocalin family. Under physiological conditions beta-lactoglobulin exists as an equilibrium mixture of monomeric and dimeric forms.

The protein resides in the secreted. Its function is as follows. Lactoglobulin is the primary component of whey, it binds retinol and is probably involved in the transport of that molecule. This chain is Beta-lactoglobulin-1A/1C, found in Sus scrofa (Pig).